We begin with the raw amino-acid sequence, 574 residues long: Proline--tRNA ligase (574 aa).

This sequence belongs to the class-II aminoacyl-tRNA synthetase family. ProS type 1 subfamily. As to quaternary structure, homodimer.

It is found in the cytoplasm. It catalyses the reaction tRNA(Pro) + L-proline + ATP = L-prolyl-tRNA(Pro) + AMP + diphosphate. In terms of biological role, catalyzes the attachment of proline to tRNA(Pro) in a two-step reaction: proline is first activated by ATP to form Pro-AMP and then transferred to the acceptor end of tRNA(Pro). As ProRS can inadvertently accommodate and process non-cognate amino acids such as alanine and cysteine, to avoid such errors it has two additional distinct editing activities against alanine. One activity is designated as 'pretransfer' editing and involves the tRNA(Pro)-independent hydrolysis of activated Ala-AMP. The other activity is designated 'posttransfer' editing and involves deacylation of mischarged Ala-tRNA(Pro). The misacylated Cys-tRNA(Pro) is not edited by ProRS. This is Proline--tRNA ligase from Desulfovibrio desulfuricans (strain ATCC 27774 / DSM 6949 / MB).